We begin with the raw amino-acid sequence, 275 residues long: Dermonecrotic toxin LamSicTox-alphaIV1ii (275 aa).

The active site involves His-5. Positions 25 and 27 each coordinate Mg(2+). His-41 functions as the Nucleophile in the catalytic mechanism. Cystine bridges form between Cys-45/Cys-51 and Cys-47/Cys-192. Residue Asp-85 participates in Mg(2+) binding.

The protein belongs to the arthropod phospholipase D family. Class II subfamily. It depends on Mg(2+) as a cofactor. In terms of tissue distribution, expressed by the venom gland.

The protein localises to the secreted. The enzyme catalyses an N-(acyl)-sphingosylphosphocholine = an N-(acyl)-sphingosyl-1,3-cyclic phosphate + choline. The catalysed reaction is an N-(acyl)-sphingosylphosphoethanolamine = an N-(acyl)-sphingosyl-1,3-cyclic phosphate + ethanolamine. It carries out the reaction a 1-acyl-sn-glycero-3-phosphocholine = a 1-acyl-sn-glycero-2,3-cyclic phosphate + choline. It catalyses the reaction a 1-acyl-sn-glycero-3-phosphoethanolamine = a 1-acyl-sn-glycero-2,3-cyclic phosphate + ethanolamine. Its function is as follows. Dermonecrotic toxins cleave the phosphodiester linkage between the phosphate and headgroup of certain phospholipids (sphingolipid and lysolipid substrates), forming an alcohol (often choline) and a cyclic phosphate. This toxin acts on sphingomyelin (SM). It may also act on ceramide phosphoethanolamine (CPE), lysophosphatidylcholine (LPC) and lysophosphatidylethanolamine (LPE), but not on lysophosphatidylserine (LPS), and lysophosphatidylglycerol (LPG). It acts by transphosphatidylation, releasing exclusively cyclic phosphate products as second products. Induces dermonecrosis, hemolysis, increased vascular permeability, edema, inflammatory response, and platelet aggregation. The sequence is that of Dermonecrotic toxin LamSicTox-alphaIV1ii from Loxosceles amazonica (Recluse spider).